The primary structure comprises 196 residues: Nodulation protein A (196 aa).

This sequence belongs to the NodA family.

The protein localises to the cytoplasm. Its function is as follows. N-acyltransferase required for nodulation. Acts in the production of a small, heat-stable compound (Nod) that stimulates mitosis in various plant protoplasts. The protein is Nodulation protein A of Sinorhizobium terangae.